A 505-amino-acid polypeptide reads, in one-letter code: Trans-cinnamate 4-monooxygenase (505 aa).

Residues Leu3–Val23 traverse the membrane as a helical segment. (E)-cinnamate-binding positions include Arg213–Gln218 and Ala306. Cys447 serves as a coordination point for heme.

It belongs to the cytochrome P450 family. Heme serves as cofactor.

It localises to the membrane. It catalyses the reaction (E)-cinnamate + reduced [NADPH--hemoprotein reductase] + O2 = (E)-4-coumarate + oxidized [NADPH--hemoprotein reductase] + H2O + H(+). Its pathway is phenylpropanoid metabolism; trans-4-coumarate biosynthesis; trans-4-coumarate from trans-cinnamate: step 1/1. Its function is as follows. Catalyzes the first oxidative step of the phenylpropanoid pathway in higher plants by transforming trans-cinnamate into p-coumarate. The compounds formed by this pathway are essential components for lignification, pollination, and defense against ultraviolet light, predators and pathogens. This is Trans-cinnamate 4-monooxygenase (CYP73A2) from Vigna radiata var. radiata (Mung bean).